The primary structure comprises 381 residues: MKLLVGTLRLWEVGRQVAFSSLTPGQECSGLRKTFWAAMRAVRTRADHQKLGHCVTMGRIMRPDDANVAGNVHGGTILKMIEEAGAIISTRHCNSQNGERCVAALARVERTDFLSPMCIGEVAHVSAEITYTSKHSVEVQVHVMSENILTGTKKLTNKATLWYVPLSLKNVDKVLEVPPIVYLRQEQEEEGRKRYEAQKLERMETKWRNGDIVQPVLNPEPNTVSYSQSSLIHLVGPSDCTLHGFVHGGVTMKLMDEVAGIVAARHCKTNIVTASVDAINFHDKIRKGCVITISGRMTFTSNKSMEIEVLVDADPVVDNSQKRYRAASAFFTYVSLNQEGKPMPVPQLVPETEDEKKRFEEGKGRYLQMKAKRQGHTEPQP.

One can recognise a HotDog ACOT-type 1 domain in the interval Leu-51–Lys-169. Asn-67 is a catalytic residue. N6-acetyllysine occurs at positions 169 and 199. The region spanning Ser-225–Glu-339 is the HotDog ACOT-type 2 domain. Asp-256 is an active-site residue. Lys-284 is modified (N6-acetyllysine). The interval Pro-342 to Pro-381 is disordered. Residues Asp-354–Gly-364 are compositionally biased toward basic and acidic residues.

Homohexamer. Widely expressed with highest levels in brain. High levels also found in thymus, large intestine and testis. Negligible in muscle and adipose tissue. In the central and peripheral nervous systems, displays a predominantly neuronal localization with highest expression in cell bodies and neurites.

The protein resides in the cytoplasm. It localises to the cytosol. It carries out the reaction hexadecanoyl-CoA + H2O = hexadecanoate + CoA + H(+). The catalysed reaction is dodecanoyl-CoA + H2O = dodecanoate + CoA + H(+). It catalyses the reaction tetradecanoyl-CoA + H2O = tetradecanoate + CoA + H(+). The enzyme catalyses decanoyl-CoA + H2O = decanoate + CoA + H(+). It carries out the reaction octanoyl-CoA + H2O = octanoate + CoA + H(+). The catalysed reaction is octadecanoyl-CoA + H2O = octadecanoate + CoA + H(+). It catalyses the reaction (9Z)-octadecenoyl-CoA + H2O = (9Z)-octadecenoate + CoA + H(+). The protein operates within lipid metabolism; fatty acid metabolism. Functionally, catalyzes the hydrolysis of acyl-CoAs into free fatty acids and coenzyme A (CoASH), regulating their respective intracellular levels. Preferentially hydrolyzes palmitoyl-CoA, but has a broad specificity acting on other fatty acyl-CoAs with chain-lengths of C8-C18. May play an important physiological function in brain. The chain is Cytosolic acyl coenzyme A thioester hydrolase (Acot7) from Mus musculus (Mouse).